A 490-amino-acid polypeptide reads, in one-letter code: GTPase Der (490 aa).

2 EngA-type G domains span residues 3-166 (PVVA…AEAM) and 200-373 (IKLA…DSAT). GTP contacts are provided by residues 9 to 16 (GRPNVGKS), 56 to 60 (DTGGI), 118 to 121 (NKVD), 206 to 213 (GKPNVGKS), 253 to 257 (DTAGV), and 318 to 321 (NKWD). A KH-like domain is found at 374 to 458 (RRVSTSMLTR…PIQLRFQEGG (85 aa)). Positions 470 to 490 (TVSQERRRKRMVGHIRDKNKD) are disordered.

It belongs to the TRAFAC class TrmE-Era-EngA-EngB-Septin-like GTPase superfamily. EngA (Der) GTPase family. As to quaternary structure, associates with the 50S ribosomal subunit.

Functionally, GTPase that plays an essential role in the late steps of ribosome biogenesis. This chain is GTPase Der, found in Shewanella pealeana (strain ATCC 700345 / ANG-SQ1).